Reading from the N-terminus, the 328-residue chain is Cytochrome c biogenesis protein CcsA (328 aa).

Transmembrane regions (helical) follow at residues 15–35 (FLVL…PSVP), 37–57 (LQAL…ALLG), 68–88 (ISNL…AHLI), 97–117 (LVGV…ALTL), 142–162 (VMML…AFLF), 236–256 (IIGL…VWAN), 271–291 (WALI…TKGW), and 297–317 (AILA…VNLL).

It belongs to the CcmF/CycK/Ccl1/NrfE/CcsA family. In terms of assembly, may interact with ccs1.

It is found in the cellular thylakoid membrane. Its function is as follows. Required during biogenesis of c-type cytochromes (cytochrome c6 and cytochrome f) at the step of heme attachment. The sequence is that of Cytochrome c biogenesis protein CcsA from Gloeothece citriformis (strain PCC 7424) (Cyanothece sp. (strain PCC 7424)).